The following is a 137-amino-acid chain: Probable S-adenosyl-L-methionine-binding protein MTH_1797 (137 aa).

The region spanning 8–137 (IRPVGVVRSP…YYEDIDSLGF (130 aa)) is the TsaA-like domain. S-adenosyl-L-methionine contacts are provided by residues 25 to 27 (PAQ), 63 to 64 (HL), R87, L97, and 117 to 120 (LDGS).

Belongs to the tRNA methyltransferase O family.

The polypeptide is Probable S-adenosyl-L-methionine-binding protein MTH_1797 (Methanothermobacter thermautotrophicus (strain ATCC 29096 / DSM 1053 / JCM 10044 / NBRC 100330 / Delta H) (Methanobacterium thermoautotrophicum)).